The following is a 198-amino-acid chain: Probable molybdenum cofactor guanylyltransferase (198 aa).

Residues leucine 11–glycine 13, lysine 23, aspartate 71, and aspartate 102 each bind GTP. Mg(2+) is bound at residue aspartate 102.

It belongs to the MobA family. The cofactor is Mg(2+).

It localises to the cytoplasm. The catalysed reaction is Mo-molybdopterin + GTP + H(+) = Mo-molybdopterin guanine dinucleotide + diphosphate. In terms of biological role, transfers a GMP moiety from GTP to Mo-molybdopterin (Mo-MPT) cofactor (Moco or molybdenum cofactor) to form Mo-molybdopterin guanine dinucleotide (Mo-MGD) cofactor. The sequence is that of Probable molybdenum cofactor guanylyltransferase from Halalkalibacterium halodurans (strain ATCC BAA-125 / DSM 18197 / FERM 7344 / JCM 9153 / C-125) (Bacillus halodurans).